The chain runs to 218 residues: uncharacterized protein (218 aa).

Basic and acidic residues predominate over residues 184 to 202 (MDREEKRKEKEEKRKRELA). The tract at residues 184-218 (MDREEKRKEKEEKRKRELAARQLKRQEKKKQKTSK) is disordered. Positions 205–218 (QLKRQEKKKQKTSK) are enriched in basic residues.

This is an uncharacterized protein from Mycoplasma pneumoniae (strain ATCC 29342 / M129 / Subtype 1) (Mycoplasmoides pneumoniae).